Consider the following 276-residue polypeptide: Ribonuclease 3 (276 aa).

The interval 1 to 29 (MRGTVSVPKKAEDAKADPPAKKKADTQAS) is disordered. Residues 9 to 25 (KKAEDAKADPPAKKKAD) are compositionally biased toward basic and acidic residues. Residues 31–157 (HTLLEGRLGY…VIGAVYLDQG (127 aa)) form the RNase III domain. E70 is a Mg(2+) binding site. The active site involves D74. Residues D143 and E146 each contribute to the Mg(2+) site. E146 is a catalytic residue. The 69-residue stretch at 184-252 (DWKTSLQELT…AESAWRSIRA (69 aa)) folds into the DRBM domain. The tract at residues 227 to 276 (YGTGTGRSKKEAEQQAAESAWRSIRAAADERAKATADAVDADPDEASASA) is disordered. The segment covering 265 to 276 (VDADPDEASASA) has biased composition (acidic residues).

The protein belongs to the ribonuclease III family. As to quaternary structure, homodimer. Mg(2+) is required as a cofactor.

It localises to the cytoplasm. It catalyses the reaction Endonucleolytic cleavage to 5'-phosphomonoester.. Functionally, digests double-stranded RNA. Involved in the processing of primary rRNA transcript to yield the immediate precursors to the large and small rRNAs (23S and 16S). Also processes some mRNAs, and tRNAs when they are encoded in the rRNA operon. May modulate key aspects of gene expression as its absence has extensive effects on the abundance of about 200 different transcripts. Probably processes pre-crRNA and tracrRNA of type II CRISPR loci if present in the organism. The polypeptide is Ribonuclease 3 (rnc) (Streptomyces coelicolor (strain ATCC BAA-471 / A3(2) / M145)).